The following is a 44-amino-acid chain: Large ribosomal subunit protein P2 (44 aa).

An N-acetylmethionine modification is found at M1. A phosphoserine mark is found at S17 and S19. At K21 the chain carries N6-acetyllysine; alternate. Residue K21 is modified to N6-succinyllysine; alternate.

It belongs to the eukaryotic ribosomal protein P1/P2 family. Heterodimer with RPLP1 at the lateral ribosomal stalk of the large ribosomal subunit. Phosphorylated.

Functionally, plays an important role in the elongation step of protein synthesis. This is Large ribosomal subunit protein P2 (RPLP2) from Oryctolagus cuniculus (Rabbit).